A 632-amino-acid chain; its full sequence is Phosphatidylinositol 3,4,5-trisphosphate 3-phosphatase and protein-tyrosine-phosphatase PTEN2B (632 aa).

Over residues 1 to 12 the composition is skewed to polar residues; the sequence is METDPANSSSKS. The segment at 1 to 98 is disordered; the sequence is METDPANSSS…RESPPSIFSS (98 aa). Residues 39–48 are compositionally biased toward basic and acidic residues; that stretch reads SAEREAHEDS. Over residues 63–73 the composition is skewed to polar residues; it reads MPASSTGSEPL. Low complexity predominate over residues 87-98; sequence SPRESPPSIFSS. Positions 189–368 constitute a Phosphatase tensin-type domain; that stretch reads RRYQEGEFDL…KYYERVQNQF (180 aa). Catalysis depends on Cys307, which acts as the Phosphocysteine intermediate. In terms of domain architecture, C2 tensin-type spans 375–502; it reads ERRCMLRGFR…FHVEIVMIEP (128 aa). Residues 504 to 603 are disordered; that stretch reads NSQPTKSKSD…SGHYNPIPNN (100 aa). The span at 505-527 shows a compositional bias: low complexity; sequence SQPTKSKSDSTQQQSQSSSSADS. A compositionally biased stretch (acidic residues) spans 535–549; that stretch reads KDDDVFSDSDGEEEG. Ser541 carries the phosphoserine modification. Over residues 550–571 the composition is skewed to polar residues; sequence NSQSYSTNEKTASSMHTTSKPH. A compositionally biased stretch (low complexity) spans 584-594; it reads ANRSVTSSSSS.

The protein belongs to the PTEN phosphatase protein family. As to expression, expressed, at low levels, in seedlings, roots, stems, leaves, flowers and siliques. However, at protein level, not observed in older leaves, flowers and siliques.

The enzyme catalyses O-phospho-L-tyrosyl-[protein] + H2O = L-tyrosyl-[protein] + phosphate. The catalysed reaction is a 1,2-diacyl-sn-glycero-3-phospho-(1D-myo-inositol-3,4,5-trisphosphate) + H2O = a 1,2-diacyl-sn-glycero-3-phospho-(1D-myo-inositol-4,5-bisphosphate) + phosphate. In terms of biological role, protein tyrosine phosphatase that also exhibits a weak lipid phosphatase activity towards PtdIns(3)P. The protein is Phosphatidylinositol 3,4,5-trisphosphate 3-phosphatase and protein-tyrosine-phosphatase PTEN2B of Arabidopsis thaliana (Mouse-ear cress).